Here is a 293-residue protein sequence, read N- to C-terminus: Glutamyl-Q tRNA(Asp) synthetase (293 aa).

L-glutamate is bound by residues 9–13 and E45; that span reads RFAPS. Residues 12–22 carry the 'HIGH' region motif; sequence PSPSGELHFGS. 4 residues coordinate Zn(2+): C101, C103, Y115, and C119. L-glutamate contacts are provided by Y172 and R190. Residues 228-232 carry the 'KMSKS' region motif; it reads KLSKQ. Residue K231 participates in ATP binding.

Belongs to the class-I aminoacyl-tRNA synthetase family. GluQ subfamily. Zn(2+) serves as cofactor.

Its function is as follows. Catalyzes the tRNA-independent activation of glutamate in presence of ATP and the subsequent transfer of glutamate onto a tRNA(Asp). Glutamate is transferred on the 2-amino-5-(4,5-dihydroxy-2-cyclopenten-1-yl) moiety of the queuosine in the wobble position of the QUC anticodon. This is Glutamyl-Q tRNA(Asp) synthetase from Klebsiella pneumoniae (strain 342).